The sequence spans 874 residues: Probable leucine--tRNA ligase, cytoplasmic (874 aa).

The 'HIGH' region motif lies at 36–46 (PYMNGRLHLGH). Residues 544–548 (KMSKS) carry the 'KMSKS' region motif. Lys-547 is an ATP binding site.

It belongs to the class-I aminoacyl-tRNA synthetase family.

The protein localises to the cytoplasm. It catalyses the reaction tRNA(Leu) + L-leucine + ATP = L-leucyl-tRNA(Leu) + AMP + diphosphate. This is Probable leucine--tRNA ligase, cytoplasmic from Encephalitozoon cuniculi (strain GB-M1) (Microsporidian parasite).